Consider the following 135-residue polypeptide: uncharacterized protein (135 aa).

Residues 1–70 (MKPDWPRRGA…RWRPQGTGTG (70 aa)) are disordered.

This is an uncharacterized protein from Homo sapiens (Human).